The chain runs to 408 residues: 3-ketoacyl-CoA thiolase B, peroxisomal (408 aa).

Catalysis depends on C112, which acts as the Acyl-thioester intermediate. Residues H366 and C394 each act as proton acceptor in the active site.

It belongs to the thiolase-like superfamily. Thiolase family. Homodimer.

It is found in the peroxisome. The enzyme catalyses an acyl-CoA + acetyl-CoA = a 3-oxoacyl-CoA + CoA. Its pathway is lipid metabolism; fatty acid metabolism. The sequence is that of 3-ketoacyl-CoA thiolase B, peroxisomal from Candida tropicalis (Yeast).